Reading from the N-terminus, the 79-residue chain is Large ribosomal subunit protein uL24 (79 aa).

This sequence belongs to the universal ribosomal protein uL24 family. As to quaternary structure, part of the 50S ribosomal subunit.

Its function is as follows. One of two assembly initiator proteins, it binds directly to the 5'-end of the 23S rRNA, where it nucleates assembly of the 50S subunit. One of the proteins that surrounds the polypeptide exit tunnel on the outside of the subunit. This chain is Large ribosomal subunit protein uL24, found in Lactobacillus delbrueckii subsp. bulgaricus (strain ATCC 11842 / DSM 20081 / BCRC 10696 / JCM 1002 / NBRC 13953 / NCIMB 11778 / NCTC 12712 / WDCM 00102 / Lb 14).